Reading from the N-terminus, the 702-residue chain is Polyribonucleotide nucleotidyltransferase (702 aa).

Residues aspartate 486 and aspartate 492 each contribute to the Mg(2+) site. A KH domain is found at 553–612 (PSMATIKIDPEKIRDVIGKGGATIRSITEQTGASIDLDDDGTVRIYAADKASSDAALLKI). The 69-residue stretch at 622–690 (DKLYKGKVVR…ARGRIKLSMK (69 aa)) folds into the S1 motif domain.

This sequence belongs to the polyribonucleotide nucleotidyltransferase family. Component of the RNA degradosome, which is a multiprotein complex involved in RNA processing and mRNA degradation. Mg(2+) is required as a cofactor.

The protein resides in the cytoplasm. The catalysed reaction is RNA(n+1) + phosphate = RNA(n) + a ribonucleoside 5'-diphosphate. Functionally, involved in mRNA degradation. Catalyzes the phosphorolysis of single-stranded polyribonucleotides processively in the 3'- to 5'-direction. This chain is Polyribonucleotide nucleotidyltransferase, found in Marinomonas sp. (strain MWYL1).